Reading from the N-terminus, the 152-residue chain is MTFTDLVIILFILALLAYAIYDQFIMPRRNGPVLLAIPLLRRSRVDGMIFVGLTAILIYNNITQHGTAITTWLLSVLALMGLYLFWIRTPKIIFKPRGFFFANVWIEYQRIKEMNLSEDGVLVMQLEQRRLLIRVRNIDDLEKIYKLLITTQ.

The next 3 helical transmembrane spans lie at 6 to 26, 45 to 65, and 67 to 87; these read LVII…QFIM, VDGM…ITQH, and TAIT…LFWI.

This sequence belongs to the UPF0266 family.

It is found in the cell inner membrane. This is UPF0266 membrane protein KPN78578_23010 from Klebsiella pneumoniae subsp. pneumoniae (strain ATCC 700721 / MGH 78578).